Consider the following 49-residue polypeptide: Large ribosomal subunit protein bL33 (49 aa).

Belongs to the bacterial ribosomal protein bL33 family.

The chain is Large ribosomal subunit protein bL33 from Clostridium botulinum (strain Alaska E43 / Type E3).